Reading from the N-terminus, the 140-residue chain is ATP synthase epsilon chain (140 aa).

It belongs to the ATPase epsilon chain family. F-type ATPases have 2 components, CF(1) - the catalytic core - and CF(0) - the membrane proton channel. CF(1) has five subunits: alpha(3), beta(3), gamma(1), delta(1), epsilon(1). CF(0) has three main subunits: a, b and c.

It is found in the cell inner membrane. Its function is as follows. Produces ATP from ADP in the presence of a proton gradient across the membrane. The chain is ATP synthase epsilon chain from Herminiimonas arsenicoxydans.